The chain runs to 418 residues: Glutamyl-tRNA reductase (418 aa).

Substrate-binding positions include 49-52, Ser109, 114-116, and Gln120; these read TCNR and EPQ. Catalysis depends on Cys50, which acts as the Nucleophile. 189–194 is a binding site for NADP(+); the sequence is GAGETI.

The protein belongs to the glutamyl-tRNA reductase family. In terms of assembly, homodimer.

The enzyme catalyses (S)-4-amino-5-oxopentanoate + tRNA(Glu) + NADP(+) = L-glutamyl-tRNA(Glu) + NADPH + H(+). The protein operates within porphyrin-containing compound metabolism; protoporphyrin-IX biosynthesis; 5-aminolevulinate from L-glutamyl-tRNA(Glu): step 1/2. In terms of biological role, catalyzes the NADPH-dependent reduction of glutamyl-tRNA(Glu) to glutamate 1-semialdehyde (GSA). This is Glutamyl-tRNA reductase from Escherichia coli O6:K15:H31 (strain 536 / UPEC).